Consider the following 568-residue polypeptide: Urease subunit alpha (568 aa).

3 residues coordinate Ni(2+): H134, H136, and K217. K217 carries the post-translational modification N6-carboxylysine. A substrate-binding site is contributed by H219. Ni(2+) contacts are provided by H246 and H272. Catalysis depends on H320, which acts as the Proton donor. D360 is a Ni(2+) binding site.

This sequence belongs to the metallo-dependent hydrolases superfamily. Urease alpha subunit family. As to quaternary structure, heterotrimer of UreA (gamma), UreB (beta) and UreC (alpha) subunits. Three heterotrimers associate to form the active enzyme. Ni cation serves as cofactor. Carboxylation allows a single lysine to coordinate two nickel ions.

The protein resides in the cytoplasm. It catalyses the reaction urea + 2 H2O + H(+) = hydrogencarbonate + 2 NH4(+). Its pathway is nitrogen metabolism; urea degradation; CO(2) and NH(3) from urea (urease route): step 1/1. This is Urease subunit alpha from Marinomonas sp. (strain MWYL1).